The primary structure comprises 551 residues: Chitinase (551 aa).

Residues 1-17 (MLYKLLNVLWLVAVSNA) form the signal peptide. The chitin binding domain (CBD) stretch occupies residues 1–149 (MLYKLLNVLW…NKPGRREDKI (149 aa)). A GH18 domain is found at 148 to 548 (KIVAAYFVEW…NAINAQFKPK (401 aa)). The N-linked (GlcNAc...) asparagine; by host glycan is linked to Asn173. Glu305 serves as the catalytic Proton donor. Asn444 carries an N-linked (GlcNAc...) asparagine; by host glycan. Residues 548 to 551 (KDEL) carry the Prevents secretion from ER motif.

This sequence belongs to the glycosyl hydrolase 18 family. Chitinase class II subfamily. Interacts with host VCATH.

The protein localises to the host endoplasmic reticulum lumen. It catalyses the reaction Random endo-hydrolysis of N-acetyl-beta-D-glucosaminide (1-&gt;4)-beta-linkages in chitin and chitodextrins.. In terms of biological role, plays a role in host liquefaction to facilitate horizontal transmission of the virus by hydrolyzing beta-chitin and by regulating the cysteine protease VCATH. Localized in the host reticulum endoplasmic via its KDEL motif, interacts with and thus prevents VCATH secretion before host cell lysis occurs. The chain is Chitinase (CHIA) from Lepidoptera (butterflies and moths).